The sequence spans 333 residues: Photosystem II assembly lipoprotein Ycf48 (333 aa).

The signal sequence occupies residues 1–23 (MTRFVSSAINLLLVLVLGVSLSG). Cys24 is lipidated: N-palmitoyl cysteine. Cys24 carries S-diacylglycerol cysteine lipidation.

This sequence belongs to the Ycf48 family. As to quaternary structure, part of early PSII assembly complexes which includes D1 (psbA) and PsbI; not found in mature PSII. Binds to the lumenal side of PSII complexes. Interacts with YidC.

The protein resides in the cellular thylakoid membrane. A factor required for optimal assembly of photosystem II (PSII), acting in the early stages of PSII assembly. Also plays a role in replacement of photodamaged D1 (psbA). Assists YidC in synthesis of chlorophyll-binding proteins. The chain is Photosystem II assembly lipoprotein Ycf48 from Parasynechococcus marenigrum (strain WH8102).